Here is a 601-residue protein sequence, read N- to C-terminus: Elongation factor 4 (601 aa).

Residues 8 to 189 (EQIRNFGIIA…LIVRKAPPPK (182 aa)) form the tr-type G domain. Position 20–25 (20–25 (DHGKST)) interacts with GTP.

The protein belongs to the TRAFAC class translation factor GTPase superfamily. Classic translation factor GTPase family. LepA subfamily.

Its subcellular location is the cell membrane. It carries out the reaction GTP + H2O = GDP + phosphate + H(+). Required for accurate and efficient protein synthesis under certain stress conditions. May act as a fidelity factor of the translation reaction, by catalyzing a one-codon backward translocation of tRNAs on improperly translocated ribosomes. Back-translocation proceeds from a post-translocation (POST) complex to a pre-translocation (PRE) complex, thus giving elongation factor G a second chance to translocate the tRNAs correctly. Binds to ribosomes in a GTP-dependent manner. In Tropheryma whipplei (strain TW08/27) (Whipple's bacillus), this protein is Elongation factor 4.